A 1473-amino-acid chain; its full sequence is NACHT, LRR and PYD domains-containing protein 1 (1473 aa).

One can recognise a Pyrin domain in the interval 1–92 (MAGGAWGRLA…CAQAQEGAGH (92 aa)). The interval 90–113 (AGHSPSFPYSPSEPHLGSPSQPTS) is disordered. Residues Ser93, Ser99, and Ser101 each carry the phosphoserine; by MAPK11 and MAPK14 modification. The residue at position 107 (Ser107) is a Phosphoserine; by MAPK14. The short motif at 111–117 (PTSTAVL) is the ZAKalpha motif 1 element. The residue at position 112 (Thr112) is a Phosphothreonine; by MAPK11, MAPK14 and MAP3K20. The residue at position 113 (Ser113) is a Phosphoserine; by MAP3K20. A phosphothreonine; by MAP3K20 mark is found at Thr114 and Thr129. The residue at position 132 (Ser132) is a Phosphoserine; by MAP3K20. Positions 160 to 254 (LPSSPDHESP…HTSLQPHHHP (95 aa)) are disordered. Ser163 carries the post-translational modification Phosphoserine; by MAPK14. Ser168 is subject to Phosphoserine; by MAPK11 and MAPk14. A Phosphoserine; by MAPK11 and MAPK14 modification is found at Ser170. Residues 170–182 (SQESPNAPTSTAV) show a composition bias toward polar residues. Ser173 bears the Phosphoserine; by MAPK11 mark. The short motif at 177–183 (PTSTAVL) is the ZAKalpha motif 2 element. At Thr178 the chain carries Phosphothreonine; by MAPK11. Residue Ser179 is modified to Phosphoserine; by MAPK11 and MAP3K20. Thr180 carries the post-translational modification Phosphothreonine; by MAPK11 and MAP3K20. Positions 218–231 (EIREREREKSEKGR) are enriched in basic and acidic residues. The 310-residue stretch at 328 to 637 (RIVILQGAAG…EFFAAMSYVL (310 aa)) folds into the NACHT domain. 334-341 (GAAGIGKS) is an ATP binding site. LRR repeat units lie at residues 809–830 (NLKELDLSGNSLSHSAVKSLCK), 838–858 (LLETLRLAGCGLTAEDCKDLA), 866–887 (TLTELDLSFNVLTDAGAKHLCQ), 895–915 (KLQRLQLVSCGLTSDCCQDLA), 923–944 (SLKELDLQQNNLDDVGVRLLCE), and 950–973 (ACKLIRLGLDQTTLSDEMRQELRA). The interval 991–1017 (VMTPTEGLDTGEMSNSTSSLKRQRLGS) is disordered. The tract at residues 1079-1212 (FWGPTGPVAT…HHIVLENPSF (134 aa)) is ZU5. Residues 1079–1364 (FWGPTGPVAT…LMPATTLIPP (286 aa)) form the FIIND domain. The tract at residues 1213–1364 (SPLGVLLKMI…LMPATTLIPP (152 aa)) is UPA. Residues 1374–1463 (DAPQLLHFVD…HLIMELWEKG (90 aa)) enclose the CARD domain.

This sequence belongs to the NLRP family. As to quaternary structure, interacts (via LRR repeats) with BCL2 and BCL2L1 (via the loop between motifs BH4 and BH3); these interactions reduce NLRP1 inflammasome-induced CASP1 activation and IL1B release, possibly by impairing NLRP1 interaction with PYCARD. Interacts with NOD2; this interaction is enhanced in the presence of muramyl dipeptide (MDP) and increases IL1B release. Interacts with EIF2AK2/PKR; this interaction requires EIF2AK2 activity, is accompanied by EIF2AK2 autophosphorylation and promotes inflammasome assembly in response to danger-associated signals. Interacts with MEFV; this interaction targets NLRP1 to degradation by autophagy, hence preventing excessive IL1B- and IL18-mediated inflammation. Binds (via LRR domain) to dsDNA and dsRNA. Interacts with DPP9; leading to inhibit activation of the inflammasome. DPP9 acts via formation of a ternary complex, composed of a DPP9 homodimer, one full-length NLRP1 protein, and one cleaved C-terminus of NLRP1 (NACHT, LRR and PYD domains-containing protein 1, C-terminus). Interacts with DPP8; leading to inhibit activation of the inflammasome, probably via formation of a ternary complex with DPP8. In terms of assembly, interacts with the C-terminal part of NLRP1 (NACHT, LRR and PYD domains-containing protein 1, C-terminus) in absence of pathogens and other damage-associated signals. Interacts with the N-terminal part of NLRP1 (NACHT, LRR and PYD domains-containing protein 1, N-terminus) in absence of pathogens and other damage-associated signals. Homomultimer; forms the NLRP1 inflammasome polymeric complex, a filament composed of homopolymers of this form in response to pathogens and other damage-associated signals. The NLRP1 inflammasome polymeric complex associates with PYCARD/ASC. Interacts (via CARD domain) with PYCARD/ASC (via CARD domain); leading to pro-caspase-1 (proCASP1) recruitment. Pro-caspase-1 (proCASP1) filament formation increases local enzyme concentration, resulting in trans-autocleavage and activation. Active CASP1 then processes IL1B and IL18 precursors, leading to the release of mature cytokines in the extracellular milieu and inflammatory response. As to quaternary structure, (Microbial infection) Interacts with vaccinia virus protein F1. In terms of assembly, (Microbial infection) Interacts with human herpes virus 8/HHV-8 proteins ORF45; relieving autoinhibition of the NLRP1 inflammasome. Autocatalytically cleaved. Autocatalytic cleavage in FIIND region occurs constitutively, prior to activation signals, and is required for inflammasome activity (IL1B release), possibly by facilitating CASP1 binding. Both N- and C-terminal parts remain associated non-covalently. In terms of processing, ubiquitinated by the cullin:ZER1/ZYG11B complex in response to pathogen-associated signals, leading to its degradation by the proteasome and subsequent release of the cleaved C-terminal part of the protein (NACHT, LRR and PYD domains-containing protein 1, C-terminus), which polymerizes and forms the NLRP1 inflammasome. Post-translationally, phosphorylated by MAP3K20 isoform ZAKalpha, MAPK11 and MAPK14 in response to UV-B irradiation and ribosome collisions, promoting activation of the NLRP1 inflammasome and pyroptosis. (Microbial infection) Cleaved between Gln-130 and Gly-131 by the Protease 3C from various human enteroviruses and rhinoviruses (EV68, EV71, Coxsackievirus B3, HRV-14 and HRV-16). This cleavage triggers N-glycine-mediated proteasomal degradation of the autoinhibitory NLRP1 N-terminal fragment via the cullin:ZER1/ZYG11B complex which liberates the activating C-terminal fragment and activates NLRP1 inflammasome. In terms of processing, (Microbial infection) Cleaved between Gln-333 and Gly-334 by the 3C-like proteinase nsp5 from human coronavirus SARS-CoV-2. This cleavage liberates the activating C-terminal fragment and activates NLRP1 inflammasome, leading to downstream activation of GSDME and lung epithelial cell death. As to expression, widely expressed. Abundantly expressed in primary immune cells (isoform 1 and isoform 2), including in neutrophils, monocytes/macrophages, dendritic cells (mostly Langerhans cells), and B- and T-lymphocytes (at protein level). Strongly expressed in epithelial cells lining the glandular epithelium, such as that of the gastrointestinal tract (stomach, small intestine, colon), the respiratory tract (trachea and bronchi), and the endometrial and endocervical glands, gallbladder, prostate, and breast (at protein level). In testis, expressed in spermatogonia and primary spermatocytes, but not in Sertoli cells (at protein level). In the brain, expressed in neurons, in particular in pyramidal ones and in oligodendrocytes, but not detected in microglia (at protein level). Expressed in adult and fetal ocular tissues, including in adult and 24-week old fetal choroid, sclera, cornea, and optic nerve, as well as in adult retina and fetal retina/retinal pigment epithelium. Highly expressed in the skin throughout the epidermis and in dermal fibroblasts, in both glabrous skin and plantar skin. It is detected in keratinocytes, but not in melanocytes. Expressed in epidermal appendages such as hair follicles.

Its subcellular location is the cytoplasm. The protein resides in the cytosol. It is found in the nucleus. It localises to the inflammasome. It catalyses the reaction ATP + H2O = ADP + phosphate + H(+). NLRP1 inflammasome is activated by cleavage by the Protease 3C from various human enteroviruses and rhinoviruses (EV68, EV71, Coxsackievirus B3, HRV-14 and HRV-16): cleavage promotes ubiquitination and degradation of the N-terminal part, releasing the cleaved C-terminal part of the protein (NACHT, LRR and PYD domains-containing protein 1, C-terminus), which polymerizes and forms the NLRP1 inflammasome. Activated double-stranded RNA: positive-strand RNA viruses such as Semliki forest virus and long dsRNA activate the NLRP1 inflammasome. In contrast to its mouse ortholog, not activated by Bacillus anthracis lethal toxin. NLRP1 inflammasome is inhibited by DPP8 and DPP9, which sequester the C-terminal fragment of NLRP1 (NACHT, LRR and PYD domains-containing protein 1, C-terminus) in a ternary complex, thereby preventing NLRP1 oligomerization and activation. NLRP1 inflammasome is activated by Val-boroPro (Talabostat, PT-100), an inhibitor of dipeptidyl peptidases DPP8 and DPP9. Val-boroPro relieves inhibition of DPP8 and/or DPP9 by promoting disruption of the ternary complex, releasing its C-terminal part from autoinhibition. ATPase activity is activated by dsRNA-binding but not dsDNA-binding. With respect to regulation, (Microbial infection) The NLRP1 inflammasome is activated by human herpes virus 8/HHV-8 protein ORF45, which interacts with the N-terminal part of NLRP1 and promotes its translocation into the nucleus, relieving autoinhibition and leading to activation. Its activity is regulated as follows. (Microbial infection) NLRP1 inflammasome is activated by cleavage by the 3C-like proteinase nsp5 from human coronavirus SARS-CoV-2. Functionally, acts as the sensor component of the NLRP1 inflammasome, which mediates inflammasome activation in response to various pathogen-associated signals, leading to subsequent pyroptosis. Inflammasomes are supramolecular complexes that assemble in the cytosol in response to pathogens and other damage-associated signals and play critical roles in innate immunity and inflammation. Acts as a recognition receptor (PRR): recognizes specific pathogens and other damage-associated signals, such as cleavage by some human enteroviruses and rhinoviruses, double-stranded RNA, UV-B irradiation, or Val-boroPro inhibitor, and mediates the formation of the inflammasome polymeric complex composed of NLRP1, CASP1 and PYCARD/ASC. In response to pathogen-associated signals, the N-terminal part of NLRP1 is degraded by the proteasome, releasing the cleaved C-terminal part of the protein (NACHT, LRR and PYD domains-containing protein 1, C-terminus), which polymerizes and associates with PYCARD/ASC to initiate the formation of the inflammasome complex: the NLRP1 inflammasome recruits pro-caspase-1 (proCASP1) and promotes caspase-1 (CASP1) activation, which subsequently cleaves and activates inflammatory cytokines IL1B and IL18 and gasdermin-D (GSDMD), leading to pyroptosis. In the absence of GSDMD expression, the NLRP1 inflammasome is able to recruit and activate CASP8, leading to activation of gasdermin-E (GSDME). Activation of NLRP1 inflammasome is also required for HMGB1 secretion; the active cytokines and HMGB1 stimulate inflammatory responses. Binds ATP and shows ATPase activity. Plays an important role in antiviral immunity and inflammation in the human airway epithelium. Specifically recognizes a number of pathogen-associated signals: upon infection by human rhinoviruses 14 and 16 (HRV-14 and HRV-16), NLRP1 is cleaved and activated which triggers NLRP1-dependent inflammasome activation and IL18 secretion. Positive-strand RNA viruses, such as Semliki forest virus and long dsRNA activate the NLRP1 inflammasome, triggering IL1B release in a NLRP1-dependent fashion. Acts as a direct sensor for long dsRNA and thus RNA virus infection. May also be activated by muramyl dipeptide (MDP), a fragment of bacterial peptidoglycan, in a NOD2-dependent manner. The NLRP1 inflammasome is also activated in response to UV-B irradiation causing ribosome collisions: ribosome collisions cause phosphorylation and activation of NLRP1 in a MAP3K20-dependent manner, leading to pyroptosis. In terms of biological role, constitutes the precursor of the NLRP1 inflammasome, which mediates autoproteolytic processing within the FIIND domain to generate the N-terminal and C-terminal parts, which are associated non-covalently in absence of pathogens and other damage-associated signals. Regulatory part that prevents formation of the NLRP1 inflammasome: in absence of pathogens and other damage-associated signals, interacts with the C-terminal part of NLRP1 (NACHT, LRR and PYD domains-containing protein 1, C-terminus), preventing activation of the NLRP1 inflammasome. In response to pathogen-associated signals, this part is ubiquitinated and degraded by the proteasome, releasing the cleaved C-terminal part of the protein, which polymerizes and forms the NLRP1 inflammasome. Its function is as follows. Constitutes the active part of the NLRP1 inflammasome. In absence of pathogens and other damage-associated signals, interacts with the N-terminal part of NLRP1 (NACHT, LRR and PYD domains-containing protein 1, N-terminus), preventing activation of the NLRP1 inflammasome. In response to pathogen-associated signals, the N-terminal part of NLRP1 is degraded by the proteasome, releasing this form, which polymerizes and associates with PYCARD/ASC to form of the NLRP1 inflammasome complex: the NLRP1 inflammasome complex then directly recruits pro-caspase-1 (proCASP1) and promotes caspase-1 (CASP1) activation, leading to gasdermin-D (GSDMD) cleavage and subsequent pyroptosis. Functionally, it is unclear whether is involved in inflammasome formation. It is not cleaved within the FIIND domain, does not assemble into specks, nor promote IL1B release. However, in an vitro cell-free system, it has been shown to be activated by MDP. This chain is NACHT, LRR and PYD domains-containing protein 1, found in Homo sapiens (Human).